We begin with the raw amino-acid sequence, 385 residues long: GDSL esterase/lipase 5 (385 aa).

The signal sequence occupies residues 1–35; the sequence is MRESTLMEKVTRRTISSFIFFIVSSTILFLAGKSS. N-linked (GlcNAc...) asparagine glycosylation occurs at N45. Residue S55 is the Nucleophile of the active site. Residues N66, N194, N211, and N289 are each glycosylated (N-linked (GlcNAc...) asparagine). Residues D345 and H348 contribute to the active site.

Belongs to the 'GDSL' lipolytic enzyme family.

The protein localises to the secreted. The sequence is that of GDSL esterase/lipase 5 (GLIP5) from Arabidopsis thaliana (Mouse-ear cress).